We begin with the raw amino-acid sequence, 288 residues long: ATP synthase gamma chain (288 aa).

This sequence belongs to the ATPase gamma chain family. F-type ATPases have 2 components, CF(1) - the catalytic core - and CF(0) - the membrane proton channel. CF(1) has five subunits: alpha(3), beta(3), gamma(1), delta(1), epsilon(1). CF(0) has three main subunits: a, b and c.

It is found in the cell membrane. In terms of biological role, produces ATP from ADP in the presence of a proton gradient across the membrane. The gamma chain is believed to be important in regulating ATPase activity and the flow of protons through the CF(0) complex. This Staphylococcus epidermidis (strain ATCC 35984 / DSM 28319 / BCRC 17069 / CCUG 31568 / BM 3577 / RP62A) protein is ATP synthase gamma chain.